The sequence spans 94 residues: Co-chaperonin GroES (94 aa).

Belongs to the GroES chaperonin family. In terms of assembly, heptamer of 7 subunits arranged in a ring. Interacts with the chaperonin GroEL.

It localises to the cytoplasm. In terms of biological role, together with the chaperonin GroEL, plays an essential role in assisting protein folding. The GroEL-GroES system forms a nano-cage that allows encapsulation of the non-native substrate proteins and provides a physical environment optimized to promote and accelerate protein folding. GroES binds to the apical surface of the GroEL ring, thereby capping the opening of the GroEL channel. The sequence is that of Co-chaperonin GroES from Clostridium beijerinckii (strain ATCC 51743 / NCIMB 8052) (Clostridium acetobutylicum).